The sequence spans 106 residues: Cytochrome c (106 aa).

3 residues coordinate heme c: C17, C20, and H21. An N6,N6,N6-trimethyllysine modification is found at K75. M83 serves as a coordination point for heme c.

This sequence belongs to the cytochrome c family. Binds 1 heme c group covalently per subunit.

Its subcellular location is the mitochondrion intermembrane space. In terms of biological role, electron carrier protein. The oxidized form of the cytochrome c heme group can accept an electron from the heme group of the cytochrome c1 subunit of cytochrome reductase. Cytochrome c then transfers this electron to the cytochrome oxidase complex, the final protein carrier in the mitochondrial electron-transport chain. The protein is Cytochrome c (CYC1) of Gibberella zeae (strain ATCC MYA-4620 / CBS 123657 / FGSC 9075 / NRRL 31084 / PH-1) (Wheat head blight fungus).